The following is a 350-amino-acid chain: S-adenosylmethionine:tRNA ribosyltransferase-isomerase (350 aa).

The protein belongs to the QueA family. As to quaternary structure, monomer.

The protein resides in the cytoplasm. The catalysed reaction is 7-aminomethyl-7-carbaguanosine(34) in tRNA + S-adenosyl-L-methionine = epoxyqueuosine(34) in tRNA + adenine + L-methionine + 2 H(+). It participates in tRNA modification; tRNA-queuosine biosynthesis. Functionally, transfers and isomerizes the ribose moiety from AdoMet to the 7-aminomethyl group of 7-deazaguanine (preQ1-tRNA) to give epoxyqueuosine (oQ-tRNA). This chain is S-adenosylmethionine:tRNA ribosyltransferase-isomerase, found in Bacillus cereus (strain 03BB102).